The sequence spans 194 residues: Thioredoxin O1, mitochondrial (194 aa).

The N-terminal 42 residues, 1 to 42, are a transit peptide targeting the mitochondrion; the sequence is MKGNWSIVRKVLHRQFSTLRSSTPSSRLSTSIRPLVLAPNSI. S75 carries the post-translational modification Phosphoserine. One can recognise a Thioredoxin domain in the interval 89 to 194; sequence VKSEEEFINA…LKNLMEQLYK (106 aa). Residues C118 and C121 each act as nucleophile in the active site. C118 and C121 are oxidised to a cystine.

This sequence belongs to the thioredoxin family. Plant O-type subfamily.

The protein resides in the mitochondrion matrix. Thiol-disulfide oxidoreductase that may participate in various redox reactions. Possesses insulin disulfide bonds reducing activity. Reduced by thioredoxin reductases NTRA and NTRB. In Arabidopsis thaliana (Mouse-ear cress), this protein is Thioredoxin O1, mitochondrial.